The chain runs to 362 residues: S-adenosylmethionine:tRNA ribosyltransferase-isomerase (362 aa).

This sequence belongs to the QueA family. As to quaternary structure, monomer.

The protein resides in the cytoplasm. The catalysed reaction is 7-aminomethyl-7-carbaguanosine(34) in tRNA + S-adenosyl-L-methionine = epoxyqueuosine(34) in tRNA + adenine + L-methionine + 2 H(+). The protein operates within tRNA modification; tRNA-queuosine biosynthesis. Functionally, transfers and isomerizes the ribose moiety from AdoMet to the 7-aminomethyl group of 7-deazaguanine (preQ1-tRNA) to give epoxyqueuosine (oQ-tRNA). This is S-adenosylmethionine:tRNA ribosyltransferase-isomerase from Xanthobacter autotrophicus (strain ATCC BAA-1158 / Py2).